A 3263-amino-acid chain; its full sequence is MHVRYLQHEHTGTVQLLLMPLSTAASFKSAKWTEEEGEEECDSVPLPIQTFLWRQTNPFLGDKIGKLHEASCVTFERVVVQNILHGLSPSLSNALASVSRWKLVRAALPHVIQCCGSLLLANVGEKKLPTSLQKILYILHWMLIDSSSECIENASTKDDRSVCQSRTQGLFNISSIQLFIYLIAPLADVISEEEVVDNIRLESGLKVWQAIWQFRQPDVWCFSAPVKQRRDELPQITFARRQNPAQLDTQGIYLGKDENTVRRPSIVPPPKPPRTDVTVLNEKRKLEEEKMKMKEDYVAIEIEAPSLKPNDLLIDMSQGVRNKEFERTSSIVRSVSEYKTNLCGQKEKLATVSKSRTSDAFDSSPTSDSSANMLEEVEGIKFSENENCSLSAVFFSSDQAPLVNLSDICSGFSIEEPHDSTQSSVEVPQHPVLESSMFLSTTSSASDVPPFVLTRASTAEDTTSSCSQQTVIPLAMPVTTETTTLPVTLPKSALTKTTNENRRTDHQRMPSTQKSVSGSTDDELDEGSFSDPTIASYLDVAVIRALLITHWQEKGVYWALSYIHNRLIEIKAYMIIRKSTRQRSNSLPSGERKLSVAPEQLTNPVWDDLKIENKPEEGRSHLHVAFNDTERRKSSDNCLAPHPTTNSRRSSLNTLSRRGINRSNPSLSNSVEVLSIRDDAEDDVSNISSKSIEKENTKLNAVFYPEALGSTNFIEKDGKISATVIVQTVNQVMDRCTGVRQCELALNIADVLLGTPLEQTETFFVQLNIMVFKIYLCLGCPHGCNEGVKSPHGDFLRAKAKAILAGLERVQPDKFKNILNDYVDNYGTQQVIDLLHSITSFCRSELTALDGRRASESRVPSYRNTFNEKDKGIEGRIINATYKTLITKISVISAELSLPENMSLQQDVRLLVNFVQEHHGNPFRRVGLSALKDATCKNPTTSDFHTKEDQTGGSPGAQSQKQSNDQASLRRGLFKKKNEKSGGTTTGNDDSEGDSSPSTPRTVSSMDDGVSPLASTSYYKKKSAPKLHFAFGLLKSVKPDMDEEISDNENEEGTSNEEAGLPQRRPLRQSSKQVKARLPIDSKGGMRLWGTYVPPPNYIDAKGIFDGARRFAFLLETARPGTFPDAPLIAAIMHLKSPVLARASLLLECANLVSRCNRGQWPEWIRSSHHRTFSLGGALANRGTPSATRRMHSLQRQAGRYFYQWGVQIGEHISKLLELSENKSKKTLQMEDTIEDFFDDGIVNNQNGEKCPIALQFIAVLLLQEITAFLRETFKTIPRSKNSKPQTGNSGWDKLLSHRRWSILSNTFNAQQTGSVNSITEINSSIHLNDKERRISFSATEEDSPRGSKDAIDEINAVDKKGSIHMQVVRPPSLSARLFSRQSTHEESGGSAQGSTKSTTYVPETGRRIATGRQRLLKRGSPMATGTQPSLESSHKRKSFRNRKQSKQAHLEEEEKSDGGSLTSQQSPIVQRMRAASMRQSSNFLALFHHAIPEFLDAGATHILSARESLKPTDDGLQSPVESVHPVIIPHSNHGSAHSQQPVVLKSSMDDEEQHMLSNLPWIKVLIKFSNSFDLECNHVGVCSAKCFQRVHRQCFRMIESLSTLYGMERNVSTRADKRNLLADNWQAKQQALRKQTETNSARASIHARQSTAVPRRESAMVGQPEFASKAIKMMLMEKMQQEKEKEKEKEKEEKDALKKQSVEQDHSSTDTEEDAQLPEKNKPMLTYLRSLVLQLVHSPISSVLKCCLLLSVEQHKQMIEVCWKMLIHEDPHVVASAASMFIVASVKKSEESLLIIKTALDSQDPQVRTSGIQRFYTLWRNRFHAWLKMEDGAQASFKVPPPGIDFTLPSPAIGQSQLPVVDPPWMPHLKTKIEELSLKEEEHATSQTIMTMTRTRRKQKQEMVKRAVREAEERQSEQRQLFRLRSSAIVSLAAYEPALFHHQQEQTEESDNSHQHARHVMPVAQPLFPSALLSVVPQIIELLDDPQVDNNGVSVGDVAKKVIWTCIVEDPSLFLRHFLEKLTNRDRQVLISEYAPTPAYEALMSQLRKLVLRFHPLPSQAAHSLLNYLFGFVMHYVRAQCEGSEKAIGMALSICWLLSPNIHGLYFKDLKQTLKKEQCDQALMITANVPSAKKIIVHGLDSTSGGIPSQFPVHEDTQFHQILNDSLEFFNIDEDDLNCFYLTDTKTGVIHLPAAYVRDYYFFHRSFYPQLTLVKLSPEVAEKKMKETAFHQKFIECGKVLLTHNILKYSPQHVIAQRVFFLHDEFTHLPSFPRKSLETCFGMYFGPGGEQLKAMESMHKFVWAKMMSDMFEKMENAFMFADLHLFINVINGIMIMHCEDVLILRRCAATYISISIHFNTLFASQGFFLIMPTLLRCYSQRQTNKVFCGVVEFICRQFYTLHRKPFLLQMCGAIANIIDNSSNDFEINPMRVKAKYWFNLIKKMEEITDEDPLDILGLVPYEKPLKALDLCYRDDPNTFCALTDAMASCICVCAFSPESKRSHHMLLIMQAMLPHMMKRLEEETLQSGNSPAAVKHEISQWITMAVEMKALINSCEQLVRGPTRAFDLVNSVSERGKSFVADSPQFFDPPTTNEDENSRPYHLKEKRSTAVAWEAAEVEEQQKETYRRPRDTLLQLIAAYIEMASVRLKELTKLGANLEHAKIPDVLDHKCYVKLGEVALALLKVAPYDLSTTTCHGLQKYFQIILPVTDWSIESNRSALNIILRRLDKTLSKIAKRQSFRKRAIWIALSSWINGICDTLNAFPYIAHLHPLRTITQLCLRMMVGDPCVEDSAASTALHPTTVLHPTPPPQTFANAVLRLTTILMQALGQFAFSLDFVTSTEGMGVSSERLEAVLCHVLIPLFLRIPNNPKEQSIFQAKDLSQCLTVMQNAISPPLVKQQAPPLISTSTLTTTFIRGAQDVTGRQGSVSVTDRGHSATVSTHRIVRESICQAIYLGLKVLMLTFGKLLAPMWPRVARIVKDLLAKKPGAPTSMAFVDFLLHSNLPISLFILPMIQNKMKQKPGTDQEAAWQTEILEKLDAKSHNIVPPSILLVKCYQELQQLKEELTMKPIEMTRSYTPTMADPHSDSSAASTAPRGASSRQSIDRRTSVHMKKVLPTMKEDIPEDPEDSEDVIDSNSTGQVTSRISKSPSIPLNKTHQSSRTRSVSGFGMWRSVRRKSRHVSSAEESSEERGSVELHDVGHHSALHEPNRTPNRRSTEALVLPLHESIDTNRHRFVSFSTPKKTHEVSEDVFQITEQHQLV.

Disordered regions lie at residues 491–527 (KSALTKTTNENRRTDHQRMPSTQKSVSGSTDDELDEG), 627–666 (NDTERRKSSDNCLAPHPTTNSRRSSLNTLSRRGINRSNPS), 939–1010 (PTTS…DDGV), 1042–1076 (DEEISDNENEEGTSNEEAGLPQRRPLRQSSKQVKA), 1380–1475 (SRQS…RMRA), 1633–1660 (LRKQTETNSARASIHARQSTAVPRRESA), and 1680–1721 (MQQE…LPEK). A compositionally biased stretch (basic and acidic residues) spans 499–508 (NENRRTDHQR). Over residues 509–519 (MPSTQKSVSGS) the composition is skewed to polar residues. The segment covering 644-658 (TTNSRRSSLNTLSRR) has biased composition (low complexity). Polar residues-rich tracts occupy residues 956 to 967 (GAQSQKQSNDQA) and 981 to 1005 (SGGTTTGNDDSEGDSSPSTPRTVSS). Residues 1042–1055 (DEEISDNENEEGTS) are compositionally biased toward acidic residues. A compositionally biased stretch (polar residues) spans 1393 to 1402 (QGSTKSTTYV). The span at 1435–1447 (HKRKSFRNRKQSK) shows a compositional bias: basic residues. Composition is skewed to polar residues over residues 1460–1469 (GSLTSQQSPI) and 1633–1653 (LRKQTETNSARASIHARQSTA). Positions 1680-1710 (MQQEKEKEKEKEKEEKDALKKQSVEQDHSST) are enriched in basic and acidic residues. 5 helical membrane passes run 2088–2108 (AIGMALSICWLLSPNIHGLYF), 2318–2338 (AFMFADLHLFINVINGIMIMH), 2352–2372 (YISISIHFNTLFASQGFFLIM), 2953–2973 (AIYLGLKVLMLTFGKLLAPMW), and 2995–3015 (AFVDFLLHSNLPISLFILPMI). Disordered regions lie at residues 3078 to 3166 (YTPT…RTRS) and 3178 to 3198 (RKSRHVSSAEESSEERGSVEL). A compositionally biased stretch (acidic residues) spans 3124–3135 (IPEDPEDSEDVI). The span at 3138 to 3166 (NSTGQVTSRISKSPSIPLNKTHQSSRTRS) shows a compositional bias: polar residues.

Belongs to the unc-80 family. Expressed in the nervous system. Expressed in both acetylcholine and GABA motor neurons.

It is found in the membrane. In terms of biological role, probable component of the nca-1 sodium channel complex, a cation channel that regulates neuronal activity by transmitting depolarization signals to synapses. Regulates the transition from slow to rapid forms of locomotion. Required for localization of nca-1 along axons and in non-synaptic regions. Contributes to endocytosis defects in synaptojanin mutants. Involved in the control of anasthetic response to halothane. The chain is Protein unc-80 (unc-80) from Caenorhabditis elegans.